We begin with the raw amino-acid sequence, 239 residues long: MSHVSNSTDEVVRNYLAAKSMVTSLKAFDQESSFAKEANYQVDRCIDEMTDAIDKHDVDTLCAMWESWNARVFHSLDTEGIKQAQCYEASAYRLFLVRCVQKKNISKCNEFFRKMSSLTLNNPQWADWFAFPYNHHAKDTEPFRKYFDKTWIEIYYVSLHNFLSTSLANVSPSVIGTIVEGIARDPTGNDHVDFDEDLIDDFAVIAQCSAPVKRGHSKPSLRNLLKSLTSSKKPSPSTD.

It belongs to the WD repeat WDR91 family. As to quaternary structure, interacts with sorf-2; the interaction is direct. Interacts with bec-1.

Its subcellular location is the early endosome. The protein resides in the late endosome. The protein localises to the cytoplasm. In terms of biological role, together with sorf-2 negatively regulates the levels of phosphatidylinositol 3-phosphate (PtdIns3P) to enable the conversion of early endosomes to late endosomes. Binds to sorf-2 and the sorf-1-sorf-2 complex likely acts through bec-1, a non-catalytic subunit of phosphatidylinositol 3-kinase (PI3K), to suppress PI3K activity, thereby negatively regulating endosomal PtdIns3P levels. The protein is Suppressor of organelle fusion 1 of Caenorhabditis elegans.